Reading from the N-terminus, the 870-residue chain is NEDD4-like E3 ubiquitin-protein ligase WWP2 (870 aa).

Residues 1-117 enclose the C2 domain; it reads MASASSSRAG…KNNGGKMENT (117 aa). Residues 150–300 form a disordered region; sequence SVPNGSAVTD…QLPAAAQAPD (151 aa). Polar residues predominate over residues 152 to 171; the sequence is PNGSAVTDGSQPPSRESSGT. Over residues 198-208 the composition is skewed to low complexity; it reads GGSARTATAAS. Position 211 is a phosphoserine (S211). Polar residues-rich tracts occupy residues 222 to 235 and 262 to 289; these read VKNS…NGTV and SVSS…TSGT. Over residues 290 to 300 the composition is skewed to low complexity; the sequence is QQLPAAAQAPD. 4 WW domains span residues 300 to 333, 330 to 363, 405 to 437, and 444 to 477; these read DALP…RPLP, RPLP…RPTA, GPLP…DPRT, and PALP…DPRP. One can recognise an HECT domain in the interval 536–870; the sequence is KPYDLRRRLY…IEETEGFGQE (335 aa). The Glycyl thioester intermediate role is filled by C838.

As to quaternary structure, interacts with SCNN1A, SCNN1B, SCNN1G, WBP1, WBP2 and ATN1. Interacts with ERBB4, NDFIP1 and NDFIP2. Interacts with ARRDC4. Interacts with POU5F1, RBP1, EGR2 and SLC11A2. Interacts (via WW domains) with ARRDC1 (via PPxY motifs); ubiquitinates ARRDC1. Interacts (via WW domains) with ARRDC2 and ARRDC3. In terms of processing, autoubiquitinated. Ubiquitinated by the SCF(FBXL15) complex, leading to its degradation by the proteasome.

The protein localises to the nucleus. It catalyses the reaction S-ubiquitinyl-[E2 ubiquitin-conjugating enzyme]-L-cysteine + [acceptor protein]-L-lysine = [E2 ubiquitin-conjugating enzyme]-L-cysteine + N(6)-ubiquitinyl-[acceptor protein]-L-lysine.. Its pathway is protein modification; protein ubiquitination. With respect to regulation, activated by NDFIP1- and NDFIP2-binding. Its function is as follows. E3 ubiquitin-protein ligase which accepts ubiquitin from an E2 ubiquitin-conjugating enzyme in the form of a thioester and then directly transfers the ubiquitin to targeted substrates. Polyubiquitinates POU5F1 by 'Lys-63'-linked conjugation and promotes it to proteasomal degradation; regulates POU5F1 protein level during differentiation of embryonal carcinoma cells (ECCs) but not in undifferentiated ECCs and embryonic stem cells (ESCs). Ubiquitinates EGR2 and promotes it to proteasomal degradation; in T-cells the ubiquitination inhibits activation-induced cell death. Ubiquitinates SLC11A2; the ubiquitination is enhanced by presence of NDFIP1 and NDFIP2. Ubiquitinates RPB1 and promotes it to proteasomal degradation. The sequence is that of NEDD4-like E3 ubiquitin-protein ligase WWP2 (Wwp2) from Mus musculus (Mouse).